A 144-amino-acid chain; its full sequence is Transcriptional regulator MraZ (144 aa).

2 SpoVT-AbrB domains span residues 4–47 (EYKN…TADK) and 77–120 (AQEI…DLKQ).

Belongs to the MraZ family. Forms oligomers.

It is found in the cytoplasm. The protein resides in the nucleoid. The polypeptide is Transcriptional regulator MraZ (Treponema denticola (strain ATCC 35405 / DSM 14222 / CIP 103919 / JCM 8153 / KCTC 15104)).